The sequence spans 216 residues: Adenylate kinase (216 aa).

10 to 15 (GAGKGT) is an ATP binding site. The segment at 30 to 59 (STGDILRENVKKGTALGLKAKSYMDKGELV) is NMP. Residues Thr31, Arg36, 57–59 (ELV), 85–88 (GFPR), and Gln92 each bind AMP. Positions 126-163 (GRRICRSCGASYHLVFNPPKAKDLCDSCGGELYQRDDD) are LID. ATP is bound at residue Arg127. Zn(2+)-binding residues include Cys130 and Cys133. Position 136-137 (136-137 (SY)) interacts with ATP. Zn(2+) contacts are provided by Cys150 and Cys153. AMP is bound by residues Arg160 and Arg171. Lys199 contacts ATP.

Belongs to the adenylate kinase family. Monomer.

The protein localises to the cytoplasm. It carries out the reaction AMP + ATP = 2 ADP. It functions in the pathway purine metabolism; AMP biosynthesis via salvage pathway; AMP from ADP: step 1/1. In terms of biological role, catalyzes the reversible transfer of the terminal phosphate group between ATP and AMP. Plays an important role in cellular energy homeostasis and in adenine nucleotide metabolism. The polypeptide is Adenylate kinase (Methanocella arvoryzae (strain DSM 22066 / NBRC 105507 / MRE50)).